Reading from the N-terminus, the 931-residue chain is Myelin regulatory factor homolog 1 (931 aa).

Over 1–658 the chain is Cytoplasmic; sequence MSSSDLLKGE…SCGSRLSQGT (658 aa). The tract at residues 29-143 is disordered; the sequence is TDEDDGSMVS…QQHQQTRGGN (115 aa). Residues 37–52 are compositionally biased toward polar residues; it reads VSPTSSADSMHQNLGV. Positions 53–68 are enriched in low complexity; sequence QQQQQQMLQAQQRQNQ. The span at 117-126 shows a compositional bias: polar residues; sequence DNGNQTMNNI. Over residues 127-138 the composition is skewed to low complexity; the sequence is QSQQLSQQQHQQ. Residues 169–436 constitute a DNA-binding region (NDT80); that stretch reads GTAAVNQPTN…TNPGSFEPQD (268 aa). In terms of domain architecture, Peptidase S74 spans 483 to 582; that stretch reads SDIRLKEAIT…RMTGDLDSKI (100 aa). A helical membrane pass occupies residues 659-679; that stretch reads VVTLVSIMAACLLAMSALYVL. At 680-931 the chain is on the lumenal side; the sequence is DWHNRNYGYH…FYRMCTLSSS (252 aa). Asn-797 and Asn-912 each carry an N-linked (GlcNAc...) asparagine glycan.

It belongs to the MRF family. In terms of assembly, homotrimer. Interacts with myrf-2. Interacts (via C-terminus) with pan-1 (via LRR regions); the interaction promotes the role of myrf-1 in the synaptic remodeling of DD GABAergic motor neurons at the cell membrane. Post-translationally, myelin regulatory factor: Follows autocatalytic cleavage via the peptidase S74 domain. Autoprocessing is apparently constitutive and is essential for transcriptional activity. In terms of tissue distribution, widely expressed in many tissues, including neuronal, muscle and epidermal stem cells. In neurons, expressed in dorsal D (DD) GABAergic motor neurons.

The protein resides in the endoplasmic reticulum membrane. The protein localises to the nucleus. It is found in the apical cell membrane. Its subcellular location is the cytoplasm. In terms of biological role, constitutes a precursor of the transcription factor. Mediates the autocatalytic cleavage that releases the Myelin regulatory factor homolog 1, N-terminal component that specifically activates transcription of genes involved in synaptic rewiring during nervous system maturation. Functionally, membrane-bound part that has no transcription factor activity and remains attached to the endoplasmic reticulum membrane following cleavage. Its function is as follows. Transcription factor that specifically activates expression of genes involved in synaptic rewiring during nervous system maturation. Specifically required for dorsal D (DD) GABAergic motor neurons synaptic rewiring. Acts in complex with myrf-2 paralog. The polypeptide is Myelin regulatory factor homolog 1 (Caenorhabditis elegans).